A 207-amino-acid chain; its full sequence is Outer-membrane lipoprotein LolB (207 aa).

An N-terminal signal peptide occupies residues 1–21 (MPQRKISFYRLLPLATLLLAA). The N-palmitoyl cysteine moiety is linked to residue cysteine 22. A lipid anchor (S-diacylglycerol cysteine) is attached at cysteine 22.

The protein belongs to the LolB family. As to quaternary structure, monomer.

The protein localises to the cell outer membrane. In terms of biological role, plays a critical role in the incorporation of lipoproteins in the outer membrane after they are released by the LolA protein. The sequence is that of Outer-membrane lipoprotein LolB from Yersinia enterocolitica serotype O:8 / biotype 1B (strain NCTC 13174 / 8081).